A 187-amino-acid chain; its full sequence is Peptide deformylase (187 aa).

Positions 114 and 157 each coordinate Fe cation. Glutamate 158 is a catalytic residue. Histidine 161 lines the Fe cation pocket.

Belongs to the polypeptide deformylase family. Fe(2+) serves as cofactor.

It carries out the reaction N-terminal N-formyl-L-methionyl-[peptide] + H2O = N-terminal L-methionyl-[peptide] + formate. Its function is as follows. Removes the formyl group from the N-terminal Met of newly synthesized proteins. Requires at least a dipeptide for an efficient rate of reaction. N-terminal L-methionine is a prerequisite for activity but the enzyme has broad specificity at other positions. The polypeptide is Peptide deformylase (Enterococcus faecalis (strain ATCC 700802 / V583)).